The sequence spans 269 residues: Alcohol dehydrogenase-related 31 kDa protein (269 aa).

11–34 (YVADCGGIALETCKVLMTKNIAKL) contacts NAD(+). Ser139 lines the substrate pocket. The active-site Proton acceptor is Tyr152.

It belongs to the short-chain dehydrogenases/reductases (SDR) family.

The polypeptide is Alcohol dehydrogenase-related 31 kDa protein (Adhr) (Drosophila lebanonensis (Fruit fly)).